The primary structure comprises 429 residues: Ribosomal RNA small subunit methyltransferase B (429 aa).

Residues 254–260 (CAAPGGK), Asp277, Asp303, and Asp322 each bind S-adenosyl-L-methionine. Cys375 acts as the Nucleophile in catalysis.

Belongs to the class I-like SAM-binding methyltransferase superfamily. RsmB/NOP family.

It localises to the cytoplasm. The catalysed reaction is cytidine(967) in 16S rRNA + S-adenosyl-L-methionine = 5-methylcytidine(967) in 16S rRNA + S-adenosyl-L-homocysteine + H(+). In terms of biological role, specifically methylates the cytosine at position 967 (m5C967) of 16S rRNA. This chain is Ribosomal RNA small subunit methyltransferase B, found in Escherichia coli O127:H6 (strain E2348/69 / EPEC).